We begin with the raw amino-acid sequence, 1148 residues long: Autophagy-related protein 11 (1148 aa).

An AIM (Atg8-family-interacting motif) motif is present at residues 567 to 570; that stretch reads FDDI. Residues 699–710 show a composition bias toward basic and acidic residues; the sequence is KAEASSDVEGNK. Disordered stretches follow at residues 699-727, 754-777, and 784-803; these read KAEASSDVEGNKTHVSGSEPMDEVSCVSN, PLDSSMLESQQNNEKGGKDSEAGE, and NSSTAESPQKSLDDNVATGR. Polar residues-rich tracts occupy residues 754–767 and 784–793; these read PLDSSMLESQQNNE and NSSTAESPQK. 2 coiled-coil regions span residues 816–868 and 956–996; these read ELRN…HLEN and DKVS…VKTL. Thr851 carries the phosphothreonine modification. Positions 1130–1133 match the AIM (Atg8-family-interacting motif) motif; it reads YFIV.

It belongs to the ATG11 family. In terms of assembly, homodimer. Interacts with ATG8E, ATG13A and ATG101. Binds to ATG8E on autophagic vesicles.

The protein resides in the cytoplasmic vesicle. Its subcellular location is the autophagosome. In terms of biological role, accessory protein involved in autophagy. Acts as a scaffold protein of the ATG1-ATG13 complex for faithful delivery of autophagic vesicles to the vacuole. Involved in the stress-induced phosphorylation of ATG1A for turnover of ATG1-ATG13 complex and proper ATG1-ATG13 complex assembly or activity. Required for selective mitophagy. Required for senescence-induced breakdown of mitochondria-resident proteins and mitochondrial vesicles. Seems not essential for ATG8-mediated autophagy. The chain is Autophagy-related protein 11 from Arabidopsis thaliana (Mouse-ear cress).